The sequence spans 183 residues: UPF0200 protein MMP1282 (183 aa).

Position 8–15 (8–15 (GMPGSGKS)) interacts with ATP.

It belongs to the UPF0200 family.

This is UPF0200 protein MMP1282 from Methanococcus maripaludis (strain DSM 14266 / JCM 13030 / NBRC 101832 / S2 / LL).